Reading from the N-terminus, the 1570-residue chain is Mediator of RNA polymerase II transcription subunit 1 (1570 aa).

2 consecutive short sequence motifs (LXXLL motif) follow at residues 585 to 589 (LTSLL) and 626 to 630 (LMNLL). Disordered stretches follow at residues 592-687 (TNNT…TEDD), 771-880 (SKLS…FKDF), and 922-1561 (SKTL…MDDD). Positions 675 to 687 (TGAEKMKNQTEDD) are enriched in basic and acidic residues. Composition is skewed to polar residues over residues 788–801 (RDSSSSGHSQSTLF), 832–861 (GSPNSDSPNTFFNSVDFNPDLLNSQSQSGF), and 931–942 (QETQSRSQSPLL). Residues 946–958 (LGKDRPQKQKVKE) are compositionally biased toward basic and acidic residues. The segment covering 961 to 970 (NGGGAGGGLS) has biased composition (gly residues). Composition is skewed to low complexity over residues 1022–1035 (PTSTGGSKSPGTSG), 1066–1082 (SSHGQYSSSGSSSSSSS), 1089–1113 (SSLSSSASGKIKSNKSDGSSGMKIG), 1121–1140 (SGQSGQSSSQSKNSSQSMGK), and 1152–1161 (SSNVSNSSGS). The segment covering 1173–1190 (MNPSLSKPNISPSHSRPS) has biased composition (polar residues). Over residues 1217–1228 (GSGGQHLSGGGS) the composition is skewed to gly residues. Residues 1229 to 1271 (NSTTKSSSGLVSSGSLSQKPNSSSSSSSSSSSSSSSSSSSSSS) are compositionally biased toward low complexity. The segment covering 1276 to 1287 (VSQNLHGNSKGK) has biased composition (polar residues). Residues 1308-1328 (VGTGGPGSEDPMDGGGGGGST) are compositionally biased toward gly residues. Basic and acidic residues predominate over residues 1347–1359 (PTKREKSEKDKSK). Polar residues-rich tracts occupy residues 1418 to 1433 (SQMQKNYGSPLISGST) and 1441 to 1455 (PSHNKSPAYTPQALD). The span at 1459–1469 (ESGSSSIAEKS) shows a compositional bias: low complexity. Positions 1494 to 1503 (KHKKHKKEKK) are enriched in basic residues. The span at 1504 to 1516 (RLKDKDRDREKKK) shows a compositional bias: basic and acidic residues. Residues 1536-1546 (MAMSGGSMMSS) show a composition bias toward low complexity.

This sequence belongs to the Mediator complex subunit 1 family. In terms of assembly, component of the Mediator complex.

The protein resides in the nucleus. Functionally, component of the Mediator complex, a coactivator involved in the regulated transcription of nearly all RNA polymerase II-dependent genes. Mediator functions as a bridge to convey information from gene-specific regulatory proteins to the basal RNA polymerase II transcription machinery. Mediator is recruited to promoters by direct interactions with regulatory proteins and serves as a scaffold for the assembly of a functional preinitiation complex with RNA polymerase II and the general transcription factors. The polypeptide is Mediator of RNA polymerase II transcription subunit 1 (med1) (Xenopus laevis (African clawed frog)).